A 625-amino-acid chain; its full sequence is MAKQVQNFNAEIKQLLDIVIHSLYSHKEIFLRELLSNASDAIDKLKFNSLTHPSLLPENWQPAIRLEPNSETKTLKIIDNGIGMTQEEVVEFIGTIARSGAKAFMQMNAEMKTKPELIGQFGVGFYSAFMVADRVTLHTQKAGSNDGTVWESMGDGTYSLDSVPRPEGTGTTITLHMKDFKEEDEVQNFTDKWVLKSLVKKYSDFIAHPIKMMGETEEETLNSQKALWLKSPSEVTKEEYKEFYQHLTHDWNEPLRTVHYRAEGTMEFNALLYVPGKKPWNYNMRDMEYGLSLYIKRVFIMADCKDLLPPYLRFVKGLVDSSDLSLNVSRELLQQDRQVTQIRKNVTNKALSTLKDLLTKERSAYEDFWTEFGATLKEGLPSDAANKEKLQDLLLFHSTSSDKMTTMDEYVARMKETQKDIYYITGDSLSQVSNSPYLEKLKEKGFEVLLLVDPVDEWVVDALSEFKGKKLQSIMREGLDLDTAEEKQQKEQEKKQAEVTLKPVLESMKKTLESDVKDVVLSDRLTNTPACLVASSADPSAHMQKLMAQMGKEYAGQQVKRIMEINPNHPVFEKMLKASPEQQTKWAEILYAQALLTEGSNLPDPVKFSQQIAELMVQAADSTKH.

Positions 1–330 are a; substrate-binding; the sequence is MAKQVQNFNA…SSDLSLNVSR (330 aa). The tract at residues 331–545 is b; sequence ELLQQDRQVT…SADPSAHMQK (215 aa). The interval 546-625 is c; the sequence is LMAQMGKEYA…MVQAADSTKH (80 aa).

It belongs to the heat shock protein 90 family. In terms of assembly, homodimer.

The protein localises to the cytoplasm. Functionally, molecular chaperone. Has ATPase activity. The sequence is that of Chaperone protein HtpG from Bdellovibrio bacteriovorus (strain ATCC 15356 / DSM 50701 / NCIMB 9529 / HD100).